We begin with the raw amino-acid sequence, 124 residues long: Iron-sulfur cluster insertion protein ErpA (124 aa).

3 residues coordinate iron-sulfur cluster: cysteine 52, cysteine 116, and cysteine 118.

It belongs to the HesB/IscA family. Homodimer. Requires iron-sulfur cluster as cofactor.

Required for insertion of 4Fe-4S clusters for at least IspG. The chain is Iron-sulfur cluster insertion protein ErpA from Vibrio atlanticus (strain LGP32) (Vibrio splendidus (strain Mel32)).